Here is a 394-residue protein sequence, read N- to C-terminus: 8-amino-7-oxononanoate synthase (394 aa).

Arg21 is a substrate binding site. Residue 112–113 (GY) coordinates pyridoxal 5'-phosphate. A substrate-binding site is contributed by His137. Positions 183, 211, and 239 each coordinate pyridoxal 5'-phosphate. Lys242 is modified (N6-(pyridoxal phosphate)lysine). A substrate-binding site is contributed by Thr358.

It belongs to the class-II pyridoxal-phosphate-dependent aminotransferase family. BioF subfamily. As to quaternary structure, homodimer. Requires pyridoxal 5'-phosphate as cofactor.

It carries out the reaction 6-carboxyhexanoyl-[ACP] + L-alanine + H(+) = (8S)-8-amino-7-oxononanoate + holo-[ACP] + CO2. It participates in cofactor biosynthesis; biotin biosynthesis. Functionally, catalyzes the decarboxylative condensation of pimeloyl-[acyl-carrier protein] and L-alanine to produce 8-amino-7-oxononanoate (AON), [acyl-carrier protein], and carbon dioxide. In Burkholderia pseudomallei (strain K96243), this protein is 8-amino-7-oxononanoate synthase.